Reading from the N-terminus, the 1381-residue chain is Hepatocyte growth factor receptor (1381 aa).

Positions 1 to 24 (MKAPAVLTPGILLLLFTLVQKSNG) are cleaved as a signal peptide. The Extracellular segment spans residues 25 to 932 (ECKEALTKSE…VIVQPDQNFT (908 aa)). The Sema domain occupies 27-515 (KEALTKSEMN…TGKKITKIPL (489 aa)). Asparagine 45 carries an N-linked (GlcNAc...) asparagine glycan. 4 cysteine pairs are disulfide-bonded: cysteine 95/cysteine 101, cysteine 98/cysteine 160, cysteine 133/cysteine 141, and cysteine 172/cysteine 175. N-linked (GlcNAc...) asparagine glycosylation is present at asparagine 106. The N-linked (GlcNAc...) asparagine glycan is linked to asparagine 149. An N-linked (GlcNAc...) asparagine glycan is attached at asparagine 202. Cystine bridges form between cysteine 298-cysteine 363 and cysteine 385-cysteine 397. N-linked (GlcNAc...) asparagine glycosylation is present at asparagine 399. Disulfide bonds link cysteine 520–cysteine 538, cysteine 526–cysteine 561, cysteine 529–cysteine 545, and cysteine 541–cysteine 551. 3 IPT/TIG domains span residues 563–655 (PTIY…FSYV), 657–739 (PIIT…FSYR), and 742–836 (PIVY…LIYV). O-linked (Man) threonine glycosylation occurs at threonine 582. Residues asparagine 607 and asparagine 635 are each glycosylated (N-linked (GlcNAc...) asparagine). Threonine 676 and threonine 761 each carry an O-linked (Man) threonine glycan. Asparagine 785, asparagine 879, and asparagine 930 each carry an N-linked (GlcNAc...) asparagine glycan. A helical transmembrane segment spans residues 933–955 (GLIAGVVSISIALLLLLGLFLWL). Residues 956–1381 (KKRKQIKDLG…QDNADGELDT (426 aa)) lie on the Cytoplasmic side of the membrane. Serine 966 carries the post-translational modification Phosphoserine. Threonine 977 carries the phosphothreonine modification. A phosphoserine mark is found at serine 990, serine 997, and serine 1000. Tyrosine 1003 is modified (phosphotyrosine). The Protein kinase domain occupies 1078–1345 (VHFNEVIGRG…RISAIFSTFI (268 aa)). Residues 1084-1092 (IGRGHFGCV) and lysine 1110 contribute to the ATP site. The Proton acceptor role is filled by aspartate 1204. Positions 1212–1381 (LDEKFTVKVA…QDNADGELDT (170 aa)) are interaction with RANBP9. Tyrosine 1230 is subject to Phosphotyrosine. Tyrosine 1234 and tyrosine 1235 each carry phosphotyrosine; by autocatalysis. Phosphothreonine is present on threonine 1289. Positions 1320–1359 (WHPKAEMRPSFSELVSRISAIFSTFIGEHYVHVNATYVNV) are interaction with MUC20. Residues tyrosine 1349 and tyrosine 1356 each carry the phosphotyrosine; by autocatalysis modification. Tyrosine 1365 is modified (phosphotyrosine).

It belongs to the protein kinase superfamily. Tyr protein kinase family. As to quaternary structure, heterodimer made of an alpha chain (50 kDa) and a beta chain (145 kDa) which are disulfide linked. Binds PLXNB1. Interacts when phosphorylated with downstream effectors including STAT3, PIK3R1, SRC, PCLG1, GRB2 and GAB1. Interacts with SPSB1, SPSB2 and SPSB4. Interacts with INPP5D/SHIP1. When phosphorylated at Tyr-1356, interacts with INPPL1/SHIP2. Interacts with RANBP9 and RANBP10, as well as SPSB1, SPSB2, SPSB3 and SPSB4. SPSB1 binding occurs in the presence and in the absence of HGF, however HGF treatment has a positive effect on this interaction. Interacts with MUC20; prevents interaction with GRB2 and suppresses hepatocyte growth factor-induced cell proliferation. Interacts with GRB10. Interacts with PTPN1 and PTPN2. Interacts with HSP90AA1 and HSP90AB1; the interaction suppresses MET kinase activity. Interacts with tensin TNS3. Interacts (when phosphorylated) with tensin TNS4 (via SH2 domain); the interaction increases MET protein stability by inhibiting MET endocytosis and subsequent lysosomal degradation. Post-translationally, autophosphorylated in response to ligand binding on Tyr-1234 and Tyr-1235 in the kinase domain leading to further phosphorylation of Tyr-1349 and Tyr-1356 in the C-terminal multifunctional docking site. Dephosphorylated by PTPRJ at Tyr-1349 and Tyr-1365. Dephosphorylated by PTPN1 and PTPN2. Ubiquitinated. Ubiquitination by CBL regulates the receptor stability and activity through proteasomal degradation. In terms of processing, O-mannosylation of IPT/TIG domains by TMEM260 is required for protein maturation. O-mannosylated residues are composed of single mannose glycans that are not elongated or modified.

The protein resides in the membrane. It carries out the reaction L-tyrosyl-[protein] + ATP = O-phospho-L-tyrosyl-[protein] + ADP + H(+). With respect to regulation, in its inactive state, the C-terminal tail interacts with the catalytic domain and inhibits the kinase activity. Upon ligand binding, the C-terminal tail is displaced and becomes phosphorylated, thus increasing the kinase activity. In terms of biological role, receptor tyrosine kinase that transduces signals from the extracellular matrix into the cytoplasm by binding to hepatocyte growth factor/HGF ligand. Regulates many physiological processes including proliferation, scattering, morphogenesis and survival. Ligand binding at the cell surface induces autophosphorylation of MET on its intracellular domain that provides docking sites for downstream signaling molecules. Following activation by ligand, interacts with the PI3-kinase subunit PIK3R1, PLCG1, SRC, GRB2, STAT3 or the adapter GAB1. Recruitment of these downstream effectors by MET leads to the activation of several signaling cascades including the RAS-ERK, PI3 kinase-AKT, or PLCgamma-PKC. The RAS-ERK activation is associated with the morphogenetic effects while PI3K/AKT coordinates prosurvival effects. During embryonic development, MET signaling plays a role in gastrulation, development and migration of muscles and neuronal precursors, angiogenesis and kidney formation. In adults, participates in wound healing as well as organ regeneration and tissue remodeling. Also promotes differentiation and proliferation of hematopoietic cells. This Saimiri boliviensis boliviensis (Bolivian squirrel monkey) protein is Hepatocyte growth factor receptor (MET).